Consider the following 239-residue polypeptide: Prolyl hydroxylase EGLN3 (239 aa).

A beta(2)beta(3) 'finger-like' loop region spans residues 62–73 (AGPRAGVSKRHL). The interval 88–104 (CEAINFLLSLIDRLVLY) is required for interaction with ADRB2. In terms of domain architecture, Fe2OG dioxygenase spans 116-214 (ERSKAMVACY…RYAMTVWYFD (99 aa)). Fe cation contacts are provided by H135, D137, and H196. R205 is a binding site for 2-oxoglutarate.

In terms of assembly, interacts with ADRB2; the interaction hydroxylates ADRB2 facilitating its ubiquitination by the VHL-E3 ligase complex. Interacts with PAX2; the interaction targets PAX2 for destruction. Interacts with PKM; the interaction hydroxylates PKM in hypoxia. Interacts with WDR83; the interaction leads to almost complete elimination of HIF-mediated reporter activity. Interacts with BCL2 (via its BH4 domain); the interaction disrupts the BAX-BCL4 complex inhibiting the anti-apoptotic activity of BCL2. It depends on Fe(2+) as a cofactor. L-ascorbate is required as a cofactor. In terms of processing, ubiquitinated by SIAH1 and/or SIAH2 in response to the unfolded protein response (UPR), leading to its degradation. As to expression, highly expressed in vascular smooth muscle. Moderately expressed in esophagus, stomach, small bowel and aorta. Low levels in tail and kidney. Expression also in pheochromocytoma cell line PC-12.

Its subcellular location is the nucleus. It localises to the cytoplasm. It catalyses the reaction L-prolyl-[protein] + 2-oxoglutarate + O2 = trans-4-hydroxy-L-prolyl-[protein] + succinate + CO2. The enzyme catalyses L-prolyl-[hypoxia-inducible factor alpha subunit] + 2-oxoglutarate + O2 = trans-4-hydroxy-L-prolyl-[hypoxia-inducible factor alpha subunit] + succinate + CO2. Its function is as follows. Prolyl hydroxylase that mediates hydroxylation of proline residues in target proteins, such as PKM, TELO2, ATF4 and HIF1A. Target proteins are preferentially recognized via a LXXLAP motif. Cellular oxygen sensor that catalyzes, under normoxic conditions, the post-translational formation of 4-hydroxyproline in hypoxia-inducible factor (HIF) alpha proteins. Hydroxylates a specific proline found in each of the oxygen-dependent degradation (ODD) domains (N-terminal, NODD, and C-terminal, CODD) of HIF1A. Also hydroxylates HIF2A. Has a preference for the CODD site for both HIF1A and HIF2A. Hydroxylation on the NODD site by EGLN3 appears to require prior hydroxylation on the CODD site. Hydroxylated HIFs are then targeted for proteasomal degradation via the von Hippel-Lindau ubiquitination complex. Under hypoxic conditions, the hydroxylation reaction is attenuated allowing HIFs to escape degradation resulting in their translocation to the nucleus, heterodimerization with HIF1B, and increased expression of hypoxy-inducible genes. ELGN3 is the most important isozyme in limiting physiological activation of HIFs (particularly HIF2A) in hypoxia. Also hydroxylates PKM in hypoxia, limiting glycolysis. Under normoxia, hydroxylates and regulates the stability of ADRB2. Regulator of cardiomyocyte and neuronal apoptosis. In cardiomyocytes, inhibits the anti-apoptotic effect of BCL2 by disrupting the BAX-BCL2 complex. In neurons, has a NGF-induced proapoptotic effect, probably through regulating CASP3 activity. Also essential for hypoxic regulation of neutrophilic inflammation. Plays a crucial role in DNA damage response (DDR) by hydroxylating TELO2, promoting its interaction with ATR which is required for activation of the ATR/CHK1/p53 pathway. Also mediates hydroxylation of ATF4, leading to decreased protein stability of ATF4. This is Prolyl hydroxylase EGLN3 (Egln3) from Rattus norvegicus (Rat).